The following is a 189-amino-acid chain: GMP synthase [glutamine-hydrolyzing] subunit A (189 aa).

Residues 1-189 (MIVILNNGGQ…CKKCGFEFEE (189 aa)) enclose the Glutamine amidotransferase type-1 domain. Cys-76 functions as the Nucleophile in the catalytic mechanism. Residues His-163 and Glu-165 contribute to the active site.

In terms of assembly, heterodimer composed of a glutamine amidotransferase subunit (A) and a GMP-binding subunit (B).

It carries out the reaction XMP + L-glutamine + ATP + H2O = GMP + L-glutamate + AMP + diphosphate + 2 H(+). It functions in the pathway purine metabolism; GMP biosynthesis; GMP from XMP (L-Gln route): step 1/1. Its function is as follows. Catalyzes the synthesis of GMP from XMP. The polypeptide is GMP synthase [glutamine-hydrolyzing] subunit A (Methanococcus maripaludis (strain C5 / ATCC BAA-1333)).